The following is a 151-amino-acid chain: Ribosome maturation factor RimP (151 aa).

The protein belongs to the RimP family.

The protein resides in the cytoplasm. Required for maturation of 30S ribosomal subunits. In Vibrio parahaemolyticus serotype O3:K6 (strain RIMD 2210633), this protein is Ribosome maturation factor RimP.